Here is a 304-residue protein sequence, read N- to C-terminus: Quorum-quenching protein AidA (304 aa).

Belongs to the AB hydrolase superfamily.

Involved in quorum quenching (QQ). Inhibits motility and biofilm formation. Could contribute in bacterial competition, as it is capable of hydrolyzing the signaling molecules that mediate interspecies communication. This is Quorum-quenching protein AidA from Acinetobacter baumannii (strain MDR-ZJ06).